The chain runs to 117 residues: MALTTERVKLFFEWFLFFGAIFIAITILYILLVLLFEVPRYIKELVRCLVEYLTRRRVWMQRTQLTEATGDVEIGRGIVEDRRDQEPAVIPHVSQVIPSQPNRRDDQGRRGNAGPMF.

Residues 15–35 (FLFFGAIFIAITILYILLVLL) traverse the membrane as a helical segment. Positions 83 to 117 (RDQEPAVIPHVSQVIPSQPNRRDDQGRRGNAGPMF) are disordered.

It localises to the host cell membrane. Transports viral genome to neighboring plant cells directly through plasmosdesmata, without any budding. The movement protein allows efficient cell to cell propagation, by bypassing the host cell wall barrier. Begomovirus genome is shuttled out of nucleus by Nuclear shuttle protein (NSP) and the movement protein transports the DNA-NSP complex to cell plasmodesmata and facilitates further movement across the cell wall. Acts as a suppressor of RNA-mediated gene silencing, also known as post-transcriptional gene silencing (PTGS), a mechanism of plant viral defense that limits the accumulation of viral RNAs. This Banana bunchy top virus (isolate Autralia) (BBTV) protein is Movement and RNA silencing protein (DNA-M).